A 113-amino-acid chain; its full sequence is Na(+)/H(+) antiporter subunit C1 (113 aa).

A run of 3 helical transmembrane segments spans residues 1–21 (MEIIMIFVSGILTAISVYLVL), 28–48 (IVMGTTLLTHAANLFLITMGG), and 72–92 (LILTAIVIAFATTAFFLVLAF).

It belongs to the CPA3 antiporters (TC 2.A.63) subunit C family. As to quaternary structure, may form a heterooligomeric complex that consists of seven subunits: mnhA1, mnhB1, mnhC1, mnhD1, mnhE1, mnhF1 and mnhG1.

It localises to the cell membrane. Functionally, mnh complex is a Na(+)/H(+) antiporter involved in Na(+) excretion. The polypeptide is Na(+)/H(+) antiporter subunit C1 (mnhC1) (Staphylococcus aureus (strain JH1)).